Consider the following 503-residue polypeptide: Cytochrome P450 3A43 (503 aa).

Heme is bound at residue cysteine 442.

This sequence belongs to the cytochrome P450 family. Requires heme as cofactor. Highest expression level in prostate. Also expressed in liver, kidney, pancreas, fetal liver and fetal skeletal muscle.

Its subcellular location is the endoplasmic reticulum membrane. It localises to the microsome membrane. It catalyses the reaction an organic molecule + reduced [NADPH--hemoprotein reductase] + O2 = an alcohol + oxidized [NADPH--hemoprotein reductase] + H2O + H(+). In terms of biological role, exhibits low testosterone 6-beta-hydroxylase activity. This chain is Cytochrome P450 3A43 (CYP3A43), found in Homo sapiens (Human).